Here is a 273-residue protein sequence, read N- to C-terminus: Putative carboxymethylenebutenolidase (273 aa).

Catalysis depends on residues Cys-130, Asp-191, and His-223.

The protein belongs to the dienelactone hydrolase family.

The enzyme catalyses 2-(5-oxo-2,5-dihydrofuran-2-ylidene)acetate + H2O = 4-oxohex-2-enedioate + H(+). This is Putative carboxymethylenebutenolidase from Saccharomyces cerevisiae (strain ATCC 204508 / S288c) (Baker's yeast).